Here is a 284-residue protein sequence, read N- to C-terminus: Tropomyosin-1 (284 aa).

Positions 1-284 (MDAIKKKMLA…DSTFAELAGY (284 aa)) form a coiled coil. The segment at 103 to 131 (EERLQSATEKLEEASKAADESERGRKVLE) is disordered.

This sequence belongs to the tropomyosin family. Homodimer.

Tropomyosin, in association with the troponin complex, plays a central role in the calcium dependent regulation of muscle contraction. This Biomphalaria glabrata (Bloodfluke planorb) protein is Tropomyosin-1.